Here is a 98-residue protein sequence, read N- to C-terminus: uncharacterized protein (98 aa).

The MOSC domain maps to 30 to 98 (KKVVPSVKIH…RRKFCRVRLE (69 aa)).

This is an uncharacterized protein from Haemophilus influenzae (strain ATCC 51907 / DSM 11121 / KW20 / Rd).